A 357-amino-acid chain; its full sequence is UDP-N-acetylglucosamine--N-acetylmuramyl-(pentapeptide) pyrophosphoryl-undecaprenol N-acetylglucosamine transferase (357 aa).

Residues 15–17 (TGG), Asn124, Arg165, Ser194, and Gln288 each bind UDP-N-acetyl-alpha-D-glucosamine.

It belongs to the glycosyltransferase 28 family. MurG subfamily.

Its subcellular location is the cell inner membrane. It catalyses the reaction di-trans,octa-cis-undecaprenyl diphospho-N-acetyl-alpha-D-muramoyl-L-alanyl-D-glutamyl-meso-2,6-diaminopimeloyl-D-alanyl-D-alanine + UDP-N-acetyl-alpha-D-glucosamine = di-trans,octa-cis-undecaprenyl diphospho-[N-acetyl-alpha-D-glucosaminyl-(1-&gt;4)]-N-acetyl-alpha-D-muramoyl-L-alanyl-D-glutamyl-meso-2,6-diaminopimeloyl-D-alanyl-D-alanine + UDP + H(+). It participates in cell wall biogenesis; peptidoglycan biosynthesis. Cell wall formation. Catalyzes the transfer of a GlcNAc subunit on undecaprenyl-pyrophosphoryl-MurNAc-pentapeptide (lipid intermediate I) to form undecaprenyl-pyrophosphoryl-MurNAc-(pentapeptide)GlcNAc (lipid intermediate II). The polypeptide is UDP-N-acetylglucosamine--N-acetylmuramyl-(pentapeptide) pyrophosphoryl-undecaprenol N-acetylglucosamine transferase (Trichormus variabilis (strain ATCC 29413 / PCC 7937) (Anabaena variabilis)).